The primary structure comprises 201 residues: MARYTGPVTRKSRRLGVDLVGGDQSFEKRPYPPGQHGRARIKESEYRTQLQEKQKARFTYGVMEKQFRRYYEEANRLPGKTGDNLLRILESRLDNVVYRAGLARTRRMARQLVSHGHFTVNGVKVDVPSYRVSQYDIIDVKDKSINTLPFEVARQTAGERPIPGWLQVVGERQRILVHQLPERAQIDVPLTEQLIVELYSK.

An S4 RNA-binding domain is found at 91–151; the sequence is SRLDNVVYRA…DKSINTLPFE (61 aa).

This sequence belongs to the universal ribosomal protein uS4 family. In terms of assembly, part of the 30S ribosomal subunit. Contacts protein S5. The interaction surface between S4 and S5 is involved in control of translational fidelity.

Its function is as follows. One of the primary rRNA binding proteins, it binds directly to 16S rRNA where it nucleates assembly of the body of the 30S subunit. In terms of biological role, with S5 and S12 plays an important role in translational accuracy. The protein is Small ribosomal subunit protein uS4 of Mycolicibacterium gilvum (strain PYR-GCK) (Mycobacterium gilvum (strain PYR-GCK)).